The chain runs to 285 residues: 4-hydroxybenzoate octaprenyltransferase (285 aa).

The next 7 helical transmembrane spans lie at 20 to 37, 96 to 116, 138 to 158, 166 to 186, 211 to 231, 234 to 254, and 262 to 282; these read IGIYLVLWPALWALWLAA, FFFVLCLLAFGLVLFLNPFTI, WPQAFLGAAFAWAIPMAFAAI, AWVIFGVTLVWALVYDTAYAV, IIGFFQAIMLLGFLWIGDLFG, WLYYGSVLIAAGFFVYHQYLL, and AFKAFLNNHWVGLVILIGIML.

The protein belongs to the UbiA prenyltransferase family. Mg(2+) is required as a cofactor.

It is found in the cell inner membrane. It carries out the reaction all-trans-octaprenyl diphosphate + 4-hydroxybenzoate = 4-hydroxy-3-(all-trans-octaprenyl)benzoate + diphosphate. It functions in the pathway cofactor biosynthesis; ubiquinone biosynthesis. Functionally, catalyzes the prenylation of para-hydroxybenzoate (PHB) with an all-trans polyprenyl group. Mediates the second step in the final reaction sequence of ubiquinone-8 (UQ-8) biosynthesis, which is the condensation of the polyisoprenoid side chain with PHB, generating the first membrane-bound Q intermediate 3-octaprenyl-4-hydroxybenzoate. This Hydrogenovibrio crunogenus (strain DSM 25203 / XCL-2) (Thiomicrospira crunogena) protein is 4-hydroxybenzoate octaprenyltransferase.